Consider the following 65-residue polypeptide: Ferredoxin-like protein in vnf region (65 aa).

4Fe-4S ferredoxin-type domains lie at 2-29 (AMAI…VLQG) and 30-65 (GIYV…PLDD). [4Fe-4S] cluster is bound by residues Cys10, Cys13, Cys16, Cys20, Cys39, Cys42, Cys50, and Cys54.

[4Fe-4S] cluster serves as cofactor.

The protein is Ferredoxin-like protein in vnf region of Azotobacter chroococcum mcd 1.